The chain runs to 327 residues: Phenylalanine--tRNA ligase alpha subunit (327 aa).

Glutamate 252 serves as a coordination point for Mg(2+).

This sequence belongs to the class-II aminoacyl-tRNA synthetase family. Phe-tRNA synthetase alpha subunit type 1 subfamily. As to quaternary structure, tetramer of two alpha and two beta subunits. Mg(2+) serves as cofactor.

The protein localises to the cytoplasm. It catalyses the reaction tRNA(Phe) + L-phenylalanine + ATP = L-phenylalanyl-tRNA(Phe) + AMP + diphosphate + H(+). This Salmonella agona (strain SL483) protein is Phenylalanine--tRNA ligase alpha subunit.